Reading from the N-terminus, the 229-residue chain is NAD(P)H-quinone oxidoreductase subunit K, chloroplastic (229 aa).

The [4Fe-4S] cluster site is built by Cys-43, Cys-44, Cys-108, and Cys-139.

It belongs to the complex I 20 kDa subunit family. In terms of assembly, NDH is composed of at least 16 different subunits, 5 of which are encoded in the nucleus. It depends on [4Fe-4S] cluster as a cofactor.

The protein localises to the plastid. The protein resides in the chloroplast thylakoid membrane. It catalyses the reaction a plastoquinone + NADH + (n+1) H(+)(in) = a plastoquinol + NAD(+) + n H(+)(out). The enzyme catalyses a plastoquinone + NADPH + (n+1) H(+)(in) = a plastoquinol + NADP(+) + n H(+)(out). Its function is as follows. NDH shuttles electrons from NAD(P)H:plastoquinone, via FMN and iron-sulfur (Fe-S) centers, to quinones in the photosynthetic chain and possibly in a chloroplast respiratory chain. The immediate electron acceptor for the enzyme in this species is believed to be plastoquinone. Couples the redox reaction to proton translocation, and thus conserves the redox energy in a proton gradient. In Coffea arabica (Arabian coffee), this protein is NAD(P)H-quinone oxidoreductase subunit K, chloroplastic.